A 334-amino-acid polypeptide reads, in one-letter code: Flavonol synthase/flavanone 3-hydroxylase (334 aa).

Residues 196 to 295 enclose the Fe2OG dioxygenase domain; it reads DLVYLMKINY…RMSWPVFLEP (100 aa). Positions 220, 222, and 276 each coordinate Fe cation.

This sequence belongs to the iron/ascorbate-dependent oxidoreductase family. Requires Fe cation as cofactor. It depends on L-ascorbate as a cofactor.

It localises to the cytoplasm. It catalyses the reaction a (2R,3R)-dihydroflavonol + 2-oxoglutarate + O2 = a flavonol + succinate + CO2 + H2O. The catalysed reaction is a (2S)-flavan-4-one + 2-oxoglutarate + O2 = a (2R,3R)-dihydroflavonol + succinate + CO2. It functions in the pathway secondary metabolite biosynthesis; flavonoid biosynthesis. Catalyzes the formation of flavonols from dihydroflavonols. It can act on dihydrokaempferol to produce kaempferol, on dihydroquercetin to produce quercitin and on dihydromyricetin to produce myricetin. This chain is Flavonol synthase/flavanone 3-hydroxylase (FLS), found in Eustoma exaltatum subsp. russellianum (Bluebells).